The following is a 284-amino-acid chain: MEMO1 family protein YN1551_0739 (284 aa).

Belongs to the MEMO1 family.

The protein is MEMO1 family protein YN1551_0739 of Saccharolobus islandicus (strain Y.N.15.51 / Yellowstone #2) (Sulfolobus islandicus).